The sequence spans 652 residues: DNA ligase (652 aa).

NAD(+)-binding positions include 29–33 (DSDYD), 78–79 (SL), and Glu107. The active-site N6-AMP-lysine intermediate is Lys109. Residues Arg130, Glu164, Lys278, and Lys302 each contribute to the NAD(+) site. Zn(2+)-binding residues include Cys395, Cys398, Cys413, and Cys418. The BRCT domain maps to 577 to 652 (NSDAALFGLT…IEDEDWLRKL (76 aa)).

The protein belongs to the NAD-dependent DNA ligase family. LigA subfamily. Mg(2+) serves as cofactor. Requires Mn(2+) as cofactor.

The enzyme catalyses NAD(+) + (deoxyribonucleotide)n-3'-hydroxyl + 5'-phospho-(deoxyribonucleotide)m = (deoxyribonucleotide)n+m + AMP + beta-nicotinamide D-nucleotide.. Functionally, DNA ligase that catalyzes the formation of phosphodiester linkages between 5'-phosphoryl and 3'-hydroxyl groups in double-stranded DNA using NAD as a coenzyme and as the energy source for the reaction. It is essential for DNA replication and repair of damaged DNA. The chain is DNA ligase from Streptococcus pyogenes serotype M18 (strain MGAS8232).